A 155-amino-acid chain; its full sequence is Low molecular weight phosphotyrosine protein phosphatase 1 (155 aa).

The Nucleophile role is filled by Cys-9. Residue Arg-15 is part of the active site. Asp-124 functions as the Proton donor in the catalytic mechanism.

This sequence belongs to the low molecular weight phosphotyrosine protein phosphatase family. Cone cells and primary pigment cells in developing pupal retina.

The protein localises to the cytoplasm. The enzyme catalyses O-phospho-L-tyrosyl-[protein] + H2O = L-tyrosyl-[protein] + phosphate. It carries out the reaction a phosphate monoester + H2O = an alcohol + phosphate. Acts on tyrosine phosphorylated proteins, low-MW aryl phosphates and natural and synthetic acyl phosphates. This chain is Low molecular weight phosphotyrosine protein phosphatase 1 (primo-1), found in Drosophila melanogaster (Fruit fly).